A 137-amino-acid polypeptide reads, in one-letter code: uncharacterized protein (137 aa).

To E.coli YfdK.

This is an uncharacterized protein from Escherichia coli (strain K12).